Here is a 435-residue protein sequence, read N- to C-terminus: WD repeat domain phosphoinositide-interacting protein 2 (435 aa).

The WD 1 repeat unit spans residues 182 to 222 (AHDSPLAALAFDASGTKLATASEKGTVIRVFSIPEGQKLFE). The short motif at 223–226 (FRRG) is the L/FRRG motif element. WD repeat units lie at residues 228-267 (KRCV…EKPP) and 311-349 (GHKN…GGEC). Residues 386–435 (VTKTYPPPSPTRHAYADDLGAVGGASEEDEMGNLRLDEDNENPPMILQTE) form a disordered region.

This sequence belongs to the WD repeat PROPPIN family.

The protein resides in the preautophagosomal structure membrane. In terms of biological role, component of the autophagy machinery that controls the major intracellular degradation process by which cytoplasmic materials are packaged into autophagosomes and delivered to lysosomes for degradation. Involved in an early step of the formation of preautophagosomal structures. This Xenopus laevis (African clawed frog) protein is WD repeat domain phosphoinositide-interacting protein 2 (wipi2).